The following is a 310-amino-acid chain: Proline iminopeptidase (310 aa).

An AB hydrolase-1 domain is found at 33-290 (PVIFLHGGPG…RVVQAGHRAF (258 aa)). Ser-107 serves as the catalytic Nucleophile. Asp-260 is an active-site residue. Residue His-287 is the Proton donor of the active site.

Belongs to the peptidase S33 family.

It is found in the cytoplasm. It catalyses the reaction Release of N-terminal proline from a peptide.. Functionally, specifically catalyzes the removal of N-terminal proline residues from peptides. This is Proline iminopeptidase (pip) from Neisseria meningitidis serogroup A / serotype 4A (strain DSM 15465 / Z2491).